A 403-amino-acid chain; its full sequence is cAMP-dependent protein kinase regulatory subunit (403 aa).

The interval methionine 1 to phenylalanine 155 is dimerization and phosphorylation. The disordered stretch occupies residues tyrosine 79–proline 125. A compositionally biased stretch (acidic residues) spans phenylalanine 87–alanine 103. A Phosphoserine modification is found at serine 117. Residues leucine 156–proline 278, glutamate 226, arginine 235, leucine 279–histidine 403, glutamate 349, and arginine 358 contribute to the 3',5'-cyclic AMP site.

The protein belongs to the cAMP-dependent kinase regulatory chain family. Tetramer, composed of 2 regulatory (R) and 2 catalytic (C) subunits. In the presence of cAMP it dissociates into 2 active monomeric C subunits and an R dimer that binds four cAMP molecules.

This chain is cAMP-dependent protein kinase regulatory subunit (PKAR), found in Blastocladiella emersonii (Aquatic fungus).